The sequence spans 394 residues: MPVSASLAYKNYDYDYDSIQPYFYFDNDDEDFYHHQQGQTQPPAPSEDIWKKFELLPTPPLSPSRRQSLSTAEQLEMVSEFLGDDVVNQSFICDADYSQSFIKSIIIQDCMWSGFSAAAKLEKVVSERLASLHAARKELMSDSSSNRLNASYLQDVSTSASECIDPSVVFPYPLPESGKSSKVAPSEPMPVLDTPPNSSSSSGSDSEEEEEEEEEEEEEEEEEEIDVVTVEKRQKKNETAVSDSRYPSPLVLKRCHVSTHQHNYAAHPSTRHDQPAVKRLRLEASSNSNSRHVKQRKCTSPRTSDSEDNDKRRTHNVLERQRRNELKLSFFALRDEIPDVANNEKAAKVVILKKATECIHSMQLDEQRLLSIKEQLRRKSEQLKHRLQLLRSSH.

O-linked (GlcNAc) threonine glycosylation is present at Thr58. Residues 76–84 carry the 9aaTAD motif; sequence EMVSEFLGD. Disordered stretches follow at residues 177–247 and 283–318; these read SGKS…SRYP and EASSNSNSRHVKQRKCTSPRTSDSEDNDKRRTHNVL. Acidic residues predominate over residues 205 to 226; that stretch reads DSEEEEEEEEEEEEEEEEEEID. Residues 229 to 238 show a composition bias toward basic and acidic residues; that stretch reads TVEKRQKKNE. The bHLH domain occupies 310 to 362; that stretch reads DKRRTHNVLERQRRNELKLSFFALRDEIPDVANNEKAAKVVILKKATECIHSM. A leucine-zipper region spans residues 369–390; it reads LLSIKEQLRRKSEQLKHRLQLL.

In terms of assembly, efficient DNA binding requires dimerization with another bHLH protein. Binds DNA as a heterodimer with MAX.

It localises to the nucleus. Its function is as follows. Transcription factor that binds DNA in a non-specific manner, yet also specifically recognizes the core sequence 5'-CAC[GA]TG-3'. Activates the transcription of growth-related genes. This chain is Transcriptional regulator Myc-1 (myca), found in Cyprinus carpio (Common carp).